We begin with the raw amino-acid sequence, 175 residues long: Glucagon family neuropeptides (175 aa).

The signal sequence occupies residues 1–23 (MSGNVYKTLLTLLVYGLIMHCNV). Residues 24–80 (YCSPDRWTPVPGAKLEEEVYDEDGNTLQDFALRAGAPGGGGPRPRWGRCTALYYPPG) constitute a propeptide that is removed on maturation. An important for receptor binding region spans residues 149–157 (VKKYLAAVL). L157 bears the Leucine amide mark. The residue at position 168 (K168) is a Lysine amide. The propeptide occupies 172–175 (VAYL).

It belongs to the glucagon family.

It is found in the secreted. Its function is as follows. Primary role of GRF is to release GH from the pituitary. In terms of biological role, PACAP is a neuropeptide involved in diverse array of physiological processes through activating the PACAP subfamily of class B1 G protein-coupled receptors: VIP receptor 1 (VIPR1), VIP receptor 2 (VIPR2), and PACAP type I receptor (ADCYAP1R1). Exerts neuroprotective and general cytoprotective effects due to anti-apoptotic, anti-inflammatory, and antioxidant actions. Promotes neuron projection development through the RAPGEF2/Rap1/B-Raf/ERK pathway. In chromaffin cells, induces long-lasting increase of intracellular calcium concentrations and neuroendocrine secretion. Involved in the control of glucose homeostasis, induces insulin secretion by pancreatic beta cells. PACAP exists in two bioactive forms from proteolysis of the same precursor protein, PACAP27 and PACAP38, which differ by eleven amino acid residues in the C-terminus. The polypeptide is Glucagon family neuropeptides (ADCYAP1) (Gallus gallus (Chicken)).